A 136-amino-acid chain; its full sequence is ATP synthase epsilon chain, chloroplastic (136 aa).

This sequence belongs to the ATPase epsilon chain family. As to quaternary structure, F-type ATPases have 2 components, CF(1) - the catalytic core - and CF(0) - the membrane proton channel. CF(1) has five subunits: alpha(3), beta(3), gamma(1), delta(1), epsilon(1). CF(0) has three main subunits: a, b and c.

The protein resides in the plastid. Its subcellular location is the chloroplast thylakoid membrane. Its function is as follows. Produces ATP from ADP in the presence of a proton gradient across the membrane. The chain is ATP synthase epsilon chain, chloroplastic from Cucumis sativus (Cucumber).